A 263-amino-acid chain; its full sequence is MARGPKKHLKRVAAPKHWMLDKLTGVFAPRPSTGPHKLRECLPLIIFLRNRLKYALTGDEVKKICMQRFIKIDGKVRTDITYPAGFMDVISIDKTGENFRLIYDTKGRFAVHRITPEEAKYKLCKVRKIFVGTKGIPHLVTHDARTIRYPDPLIKVNDTIQIDLETGKITDFIKFDTGNLCMVTGGANLGRIGVITNRERHPGSFDVVHVKDANGNSFATRLSNIFVIGKGNKPWISLPRGKGIRLTIAEERDKRLAAKQSSG.

The S4 RNA-binding domain occupies 42-104 (LPLIIFLRNR…TGENFRLIYD (63 aa)).

This sequence belongs to the eukaryotic ribosomal protein eS4 family.

This Bos taurus (Bovine) protein is Small ribosomal subunit protein eS4 (RPS4).